The sequence spans 133 residues: Probable mitochondrial pyruvate carrier 2 (133 aa).

Transmembrane regions (helical) follow at residues 39–55 (VTNL…IVPI), 73–91 (ASSL…TLIS), and 99–116 (MLAA…YNIY).

It belongs to the mitochondrial pyruvate carrier (MPC) (TC 2.A.105) family.

It localises to the mitochondrion inner membrane. Functionally, may mediate the uptake of pyruvate into mitochondria. The sequence is that of Probable mitochondrial pyruvate carrier 2 from Dictyostelium discoideum (Social amoeba).